Reading from the N-terminus, the 437-residue chain is Protein translocase subunit SecY (437 aa).

10 helical membrane passes run L19 to V39, L69 to L89, V122 to F142, I157 to L177, G189 to I209, W219 to V239, V276 to A296, P316 to I336, G378 to A398, and Q400 to V420.

Belongs to the SecY/SEC61-alpha family. As to quaternary structure, component of the Sec protein translocase complex. Heterotrimer consisting of SecY, SecE and SecG subunits. The heterotrimers can form oligomers, although 1 heterotrimer is thought to be able to translocate proteins. Interacts with the ribosome. Interacts with SecDF, and other proteins may be involved. Interacts with SecA.

The protein localises to the cell membrane. The central subunit of the protein translocation channel SecYEG. Consists of two halves formed by TMs 1-5 and 6-10. These two domains form a lateral gate at the front which open onto the bilayer between TMs 2 and 7, and are clamped together by SecE at the back. The channel is closed by both a pore ring composed of hydrophobic SecY resides and a short helix (helix 2A) on the extracellular side of the membrane which forms a plug. The plug probably moves laterally to allow the channel to open. The ring and the pore may move independently. The protein is Protein translocase subunit SecY of Streptomyces galbus.